Reading from the N-terminus, the 633-residue chain is Threonine--tRNA ligase (633 aa).

One can recognise a TGS domain in the interval 1–59 (MIKVTFLAEQKVKEYSGRVTGFDILQPDALREAIAFKVNGELYDLSREIESDTEIEVIQ). Residues 240–532 (DHRKIAKDMD…LIENYAGKFP (293 aa)) form a catalytic region. Zn(2+)-binding residues include cysteine 332, histidine 383, and histidine 509.

The protein belongs to the class-II aminoacyl-tRNA synthetase family. Homodimer. Zn(2+) is required as a cofactor.

The protein resides in the cytoplasm. It catalyses the reaction tRNA(Thr) + L-threonine + ATP = L-threonyl-tRNA(Thr) + AMP + diphosphate + H(+). Catalyzes the attachment of threonine to tRNA(Thr) in a two-step reaction: L-threonine is first activated by ATP to form Thr-AMP and then transferred to the acceptor end of tRNA(Thr). Also edits incorrectly charged L-seryl-tRNA(Thr). The chain is Threonine--tRNA ligase from Wolbachia pipientis subsp. Culex pipiens (strain wPip).